The chain runs to 41 residues: U-megalopygitoxin(11)-Mo28 (41 aa).

The first 29 residues, 1–29 (MRTTLLLLIIAITVMVFVSEAYAAPAPEP), serve as a signal peptide directing secretion.

This sequence belongs to the caterpillar 11 family. In terms of tissue distribution, expressed by the venom apparatus.

It localises to the secreted. Its function is as follows. Probable toxin. This Megalopyge opercularis (Southern flannel moth) protein is U-megalopygitoxin(11)-Mo28.